A 1335-amino-acid chain; its full sequence is Xanthine dehydrogenase/oxidase (1335 aa).

The 2Fe-2S ferredoxin-type domain maps to 7–94; sequence DELVFFVNGK…HVAVTTVEGI (88 aa). 8 residues coordinate [2Fe-2S] cluster: Cys-46, Cys-51, Cys-54, Cys-76, Cys-115, Cys-118, Cys-150, and Cys-152. Positions 231 to 416 constitute an FAD-binding PCMH-type domain; the sequence is FEGERVTWIQ…VSIVIPYSRK (186 aa). FAD is bound by residues 259-266, Phe-339, 349-353, Asp-362, Leu-406, and Lys-424; these read LVVGNTEI and SIGGN. The cysteines at positions 538 and 995 are disulfide-linked. The Mo-molybdopterin site is built by Gln-770 and Phe-801. Residues Glu-805 and Arg-883 each contribute to the substrate site. Arg-915 serves as a coordination point for Mo-molybdopterin. Substrate is bound by residues Phe-917 and Thr-1013. Ala-1082 contributes to the Mo-molybdopterin binding site. Catalysis depends on Glu-1264, which acts as the Proton acceptor.

The protein belongs to the xanthine dehydrogenase family. In terms of assembly, homodimer. Interacts with BTN1A1. Requires FAD as cofactor. The cofactor is Mo-molybdopterin. [2Fe-2S] cluster serves as cofactor. Subject to partial proteolysis; this alters the enzyme from the dehydrogenase form (D) to the oxidase form (O). In terms of processing, contains sulfhydryl groups that are easily oxidized (in vitro); this alters the enzyme from the dehydrogenase form (D) to the oxidase form (O).

Its subcellular location is the cytoplasm. It localises to the peroxisome. The protein resides in the secreted. It carries out the reaction xanthine + NAD(+) + H2O = urate + NADH + H(+). The enzyme catalyses hypoxanthine + NAD(+) + H2O = xanthine + NADH + H(+). The catalysed reaction is xanthine + O2 + H2O = urate + H2O2. Can be converted from the dehydrogenase form (D) to the oxidase form (O) irreversibly by proteolysis or reversibly through the oxidation of sulfhydryl groups. In terms of biological role, key enzyme in purine degradation. Catalyzes the oxidation of hypoxanthine to xanthine. Catalyzes the oxidation of xanthine to uric acid. Contributes to the generation of reactive oxygen species. This Mus musculus (Mouse) protein is Xanthine dehydrogenase/oxidase (Xdh).